We begin with the raw amino-acid sequence, 196 residues long: dITP/XTP pyrophosphatase (196 aa).

Residue 10 to 15 (TSNKGK) participates in substrate binding. The Proton acceptor role is filled by aspartate 71. Position 71 (aspartate 71) interacts with Mg(2+). Residues serine 72, 156–159 (FGYD), lysine 179, and 184–185 (HR) contribute to the substrate site.

This sequence belongs to the HAM1 NTPase family. In terms of assembly, homodimer. It depends on Mg(2+) as a cofactor.

The catalysed reaction is XTP + H2O = XMP + diphosphate + H(+). It catalyses the reaction dITP + H2O = dIMP + diphosphate + H(+). The enzyme catalyses ITP + H2O = IMP + diphosphate + H(+). Pyrophosphatase that catalyzes the hydrolysis of nucleoside triphosphates to their monophosphate derivatives, with a high preference for the non-canonical purine nucleotides XTP (xanthosine triphosphate), dITP (deoxyinosine triphosphate) and ITP. Seems to function as a house-cleaning enzyme that removes non-canonical purine nucleotides from the nucleotide pool, thus preventing their incorporation into DNA/RNA and avoiding chromosomal lesions. This Haemophilus ducreyi (strain 35000HP / ATCC 700724) protein is dITP/XTP pyrophosphatase.